Consider the following 518-residue polypeptide: Trigger factor (518 aa).

In terms of domain architecture, PPIase FKBP-type spans 170–255 (GDVVVIDFVG…VKGLESPQEA (86 aa)). Residues 447-518 (EAPAKPAKKA…AKKAAAKKDA (72 aa)) are disordered. Basic residues-rich tracts occupy residues 452-468 (PAKK…KKAA) and 501-518 (PAAK…KKDA).

It belongs to the FKBP-type PPIase family. Tig subfamily.

The protein localises to the cytoplasm. It catalyses the reaction [protein]-peptidylproline (omega=180) = [protein]-peptidylproline (omega=0). In terms of biological role, involved in protein export. Acts as a chaperone by maintaining the newly synthesized protein in an open conformation. Functions as a peptidyl-prolyl cis-trans isomerase. This is Trigger factor from Maricaulis maris (strain MCS10) (Caulobacter maris).